The following is a 146-amino-acid chain: Late protein OPG112 (146 aa).

Residues 10-32 (LAMTAFFGELSTLDIMALIMSIF) traverse the membrane as a helical segment.

The protein belongs to the orthopoxvirus OPG112 family.

It is found in the host membrane. It localises to the host cytoplasm. Contributes to the formation of crescents and immature virions (IV). Interacts with phosphatidylinositol-3-phosphate (PI3P) and phosphatidylinositol-4-phosphate (PI4P) lipids in order to form virion membranes. Mechanistically, mediates proper formation of OPG125-hexamers, and hence the honey comb lattice and spherical immature virus. This Bos taurus (Bovine) protein is Late protein OPG112 (OPG112).